Consider the following 531-residue polypeptide: Peptide chain release factor 3 (531 aa).

A tr-type G domain is found at 10–278; sequence RRRRTFAIIS…SLIDWAPAPK (269 aa). GTP is bound by residues 19–26, 87–91, and 141–144; these read SHPDAGKT, DTPGH, and NKYD.

It belongs to the TRAFAC class translation factor GTPase superfamily. Classic translation factor GTPase family. PrfC subfamily.

It localises to the cytoplasm. Its function is as follows. Increases the formation of ribosomal termination complexes and stimulates activities of RF-1 and RF-2. It binds guanine nucleotides and has strong preference for UGA stop codons. It may interact directly with the ribosome. The stimulation of RF-1 and RF-2 is significantly reduced by GTP and GDP, but not by GMP. The sequence is that of Peptide chain release factor 3 from Neisseria meningitidis serogroup B (strain ATCC BAA-335 / MC58).